We begin with the raw amino-acid sequence, 223 residues long: Putative nudix hydrolase 2 (223 aa).

Residues 72 to 213 form the Nudix hydrolase domain; that stretch reads ASADGVSIIA…SIVVESTLLA (142 aa). The Nudix box motif lies at 111 to 132; sequence GLIDAGETAQQAAIRELKEETG. Positions 126 and 130 each coordinate Mg(2+).

It belongs to the Nudix hydrolase family. It depends on Mg(2+) as a cofactor. The cofactor is Mn(2+).

Probably mediates the hydrolysis of some nucleoside diphosphate derivatives. The polypeptide is Putative nudix hydrolase 2 (ndx-2) (Caenorhabditis elegans).